We begin with the raw amino-acid sequence, 491 residues long: MSARVLMVQGCTSDAGKSTLVAALCRWLHRQGIAVAPFKPQNMALNSAVTVDGGEIGRAQALQAQACGLDPQTDFNPVLLKPNSDTGAQVIVHGQPVATLDAVGYHAYKATAFKAVLASHERLVERFDVVLVEGAGSPAEINLRANDIANMGYAEAVDCAVILVADIDRGGVFAHLVGTLALLSASERARVAGVVINRFRGDLALLQPGLEWLERETGKPVLGVLPYLHGLQLDAEDAVPRNAPQKPQSQLRVVVPVLPRISNHTDIDALLAHPQVDVRLIGPGQTPPPCDLILLPGSKSTRHDLQWLRTHGWDAAIARHLRYGGKLLGICGGLQMLGTHLHDPDGIEGAAGSSPGLGWLPLQTTLQPHKQLHRVHGRLLLGDAGVSGYEIHCGISSGAALARPLLQLDDGRTDGAISDDGQVLGTYVHGVFDHPQALAALLAWAGLAQAAPLDLAALREASLERLADAVHTHLDTAALTRLISREAACST.

Positions 250–437 (QLRVVVPVLP…VHGVFDHPQA (188 aa)) constitute a GATase cobBQ-type domain. Catalysis depends on C331, which acts as the Nucleophile. The active site involves H429.

It belongs to the CobB/CobQ family. CobQ subfamily.

It participates in cofactor biosynthesis; adenosylcobalamin biosynthesis. Catalyzes amidations at positions B, D, E, and G on adenosylcobyrinic A,C-diamide. NH(2) groups are provided by glutamine, and one molecule of ATP is hydrogenolyzed for each amidation. In Xanthomonas axonopodis pv. citri (strain 306), this protein is Cobyric acid synthase.